The following is a 467-amino-acid chain: Argininosuccinate lyase (467 aa).

The protein belongs to the lyase 1 family. Argininosuccinate lyase subfamily.

It localises to the cytoplasm. It catalyses the reaction 2-(N(omega)-L-arginino)succinate = fumarate + L-arginine. It functions in the pathway amino-acid biosynthesis; L-arginine biosynthesis; L-arginine from L-ornithine and carbamoyl phosphate: step 3/3. The sequence is that of Argininosuccinate lyase from Sinorhizobium fredii (strain NBRC 101917 / NGR234).